A 369-amino-acid polypeptide reads, in one-letter code: Methylthioribose-1-phosphate isomerase (369 aa).

Substrate is bound by residues 54-56 (RGA), arginine 95, and glutamine 208. Residue aspartate 249 is the Proton donor of the active site. 259–260 (NK) serves as a coordination point for substrate.

The protein belongs to the eIF-2B alpha/beta/delta subunits family. MtnA subfamily.

It catalyses the reaction 5-(methylsulfanyl)-alpha-D-ribose 1-phosphate = 5-(methylsulfanyl)-D-ribulose 1-phosphate. The protein operates within amino-acid biosynthesis; L-methionine biosynthesis via salvage pathway; L-methionine from S-methyl-5-thio-alpha-D-ribose 1-phosphate: step 1/6. In terms of biological role, catalyzes the interconversion of methylthioribose-1-phosphate (MTR-1-P) into methylthioribulose-1-phosphate (MTRu-1-P). In Desulfatibacillum aliphaticivorans, this protein is Methylthioribose-1-phosphate isomerase.